The following is a 166-amino-acid chain: Transcription factor HES-5 (166 aa).

The bHLH domain maps to 16 to 72 (KNRLRKPVVEKMRRDRINSSIEQLKLLLEQEFARHQPNSKLEKADILEMAVSYLKHS). Residues 88–119 (YSEGYSWCLQEAVQFLTLHAASDTQMKLLYHF) form the Orange domain. Residues 125 to 144 (APAAPAKEPKAPGAAPPPAL) form a disordered region. A WRPW motif motif is present at residues 163–166 (WRPW).

Transcription repression requires formation of a complex with a corepressor protein of the Groucho/TLE family. As to expression, expressed in fetal heart and brain tumors.

Its subcellular location is the nucleus. In terms of biological role, transcriptional repressor of genes that require a bHLH protein for their transcription. Plays an important role as neurogenesis negative regulator. The protein is Transcription factor HES-5 (HES5) of Homo sapiens (Human).